A 188-amino-acid polypeptide reads, in one-letter code: MGKYYCDYCDVFLVSESPSVRKAHNSGRNHLTNVRDYYSSLGHDKAQSYIDEITRMFETGGGNSTSNRGPGGNPPGSQPGPPNAGMSGPMRPPFSNSTAGPNMPPLPPAMLALMNGQNGMSSPGSGPPPMRFAGPPIPNNMPPGMMQPPHVNGYSSGPLPPQPQPASGGQGAPPLTARMNPDRARQLG.

The Matrin-type zinc finger occupies 4 to 36; the sequence is YYCDYCDVFLVSESPSVRKAHNSGRNHLTNVRD. The interval 57-188 is disordered; the sequence is FETGGGNSTS…MNPDRARQLG (132 aa). A compositionally biased stretch (pro residues) spans 72-82; the sequence is GNPPGSQPGPP. Residues 109-124 show a composition bias toward low complexity; the sequence is AMLALMNGQNGMSSPG. The span at 125-141 shows a compositional bias: pro residues; sequence SGPPPMRFAGPPIPNNM.

The protein belongs to the U1 small nuclear ribonucleoprotein C family. As to quaternary structure, U1 snRNP is composed of the 7 core Sm proteins B/B', D1, D2, D3, E, F and G that assemble in a heptameric protein ring on the Sm site of the small nuclear RNA to form the core snRNP, and at least 3 U1 snRNP-specific proteins U1-70K, U1-A and U1-C. U1-C interacts with U1 snRNA and the 5' splice-site region of the pre-mRNA.

The protein resides in the nucleus. Its function is as follows. Component of the spliceosomal U1 snRNP, which is essential for recognition of the pre-mRNA 5' splice-site and the subsequent assembly of the spliceosome. U1-C is directly involved in initial 5' splice-site recognition for both constitutive and regulated alternative splicing. The interaction with the 5' splice-site seems to precede base-pairing between the pre-mRNA and the U1 snRNA. Stimulates commitment or early (E) complex formation by stabilizing the base pairing of the 5' end of the U1 snRNA and the 5' splice-site region. The polypeptide is U1 small nuclear ribonucleoprotein C-2 (Puccinia graminis f. sp. tritici (strain CRL 75-36-700-3 / race SCCL) (Black stem rust fungus)).